We begin with the raw amino-acid sequence, 163 residues long: Nucleotide-binding protein KPK_4305 (163 aa).

Belongs to the YajQ family.

Its function is as follows. Nucleotide-binding protein. The protein is Nucleotide-binding protein KPK_4305 of Klebsiella pneumoniae (strain 342).